We begin with the raw amino-acid sequence, 78 residues long: MICOS complex subunit MIC10 (78 aa).

Position 2 is an N-acetylserine (Ser-2). Residues 17–36 traverse the membrane as a helical segment; it reads AVVKIGTGFGLGIVFSLTFF. The Mitochondrial intermembrane segment spans residues 37–78; the sequence is KRRMWPLAFGSGMGLGMAYSNCQHDFQAPYLLHGKYVKEQEQ.

It belongs to the MICOS complex subunit Mic10 family. Component of the mitochondrial contact site and cristae organizing system (MICOS) complex, composed of at least MICOS10/MIC10, CHCHD3/MIC19, CHCHD6/MIC25, APOOL/MIC27, IMMT/MIC60, APOO/MIC23/MIC26 and MICOS13/MIC13. This complex was also known under the names MINOS or MitOS complex. The MICOS complex associates with mitochondrial outer membrane proteins SAMM50, MTX1 and MTX2 (together described as components of the mitochondrial outer membrane sorting assembly machinery (SAM) complex) and DNAJC11, mitochondrial inner membrane protein TMEM11 and with HSPA9. The MICOS and SAM complexes together with DNAJC11 are part of a large protein complex spanning both membranes termed the mitochondrial intermembrane space bridging (MIB) complex. Interacts with IMMT/MIC60 and MICOS13/MIC13. Interacts with APOO/MIC23/MIC26 and APOOL/MIC27. Interacts with ARMC1.

Its subcellular location is the mitochondrion inner membrane. In terms of biological role, component of the MICOS complex, a large protein complex of the mitochondrial inner membrane that plays crucial roles in the maintenance of crista junctions, inner membrane architecture, and formation of contact sites to the outer membrane. The chain is MICOS complex subunit MIC10 from Homo sapiens (Human).